The sequence spans 250 residues: Probable xyloglucan-specific endo-beta-1,4-glucanase A (250 aa).

The signal sequence occupies residues 1–19 (MKLSVLSLASLASAAALNA). An N-linked (GlcNAc...) asparagine glycan is attached at Asn-72.

Belongs to the glycosyl hydrolase 12 (cellulase H) family.

The protein resides in the secreted. The catalysed reaction is xyloglucan + H2O = xyloglucan oligosaccharides.. In terms of biological role, catalyzes endohydrolysis of 1,4-beta-D-glucosidic linkages in xyloglucan with retention of the beta-configuration of the glycosyl residues. Specific for xyloglucan and does not hydrolyze other cell wall components. The protein is Probable xyloglucan-specific endo-beta-1,4-glucanase A (xgeA) of Aspergillus terreus (strain NIH 2624 / FGSC A1156).